Consider the following 204-residue polypeptide: Guanylate kinase (204 aa).

The 182-residue stretch at 1–182 folds into the Guanylate kinase-like domain; the sequence is MLYIISAPSG…ALSDLNTIIC (182 aa). ATP is bound at residue 7-14; the sequence is APSGTGKS.

It belongs to the guanylate kinase family.

Its subcellular location is the cytoplasm. The enzyme catalyses GMP + ATP = GDP + ADP. Essential for recycling GMP and indirectly, cGMP. The sequence is that of Guanylate kinase from Baumannia cicadellinicola subsp. Homalodisca coagulata.